The chain runs to 1230 residues: Soluble starch synthase 3, chloroplastic/amyloplastic (1230 aa).

The N-terminal 60 residues, 1 to 60 (MDVPFPLHRSLSCTSVSNAITHLKIKPILGFVSHGTTSLSVQSSSWRKDGMVTGVSFSIC), are a transit peptide targeting the chloroplast. The tract at residues 66 to 189 (RRRRKVSTPR…KDAVKLNKSK (124 aa)) is disordered. Positions 124–145 (VEARVETSDDDTKGVVRDHKFL) are enriched in basic and acidic residues. The span at 152 to 170 (NGSTKSISMSPVRVSSQFV) shows a compositional bias: polar residues. Residues 177–189 (GDDKDAVKLNKSK) are compositionally biased toward basic and acidic residues. Lys-794 lines the ADP-alpha-D-glucose pocket.

Belongs to the glycosyltransferase 1 family. Bacterial/plant glycogen synthase subfamily. As to expression, tuber, sink and source leaves.

It localises to the plastid. The protein localises to the chloroplast. The protein resides in the amyloplast. It carries out the reaction [(1-&gt;4)-alpha-D-glucosyl](n) + ADP-alpha-D-glucose = [(1-&gt;4)-alpha-D-glucosyl](n+1) + ADP + H(+). It participates in glycan biosynthesis; starch biosynthesis. Functionally, may account for most of the soluble starch synthase activity in the tubers. Contributes only a tiny percentage of the granule-bound activity, but may also contribute to the deposition of transient starch in chloroplasts of leaves. The sequence is that of Soluble starch synthase 3, chloroplastic/amyloplastic (SS3) from Solanum tuberosum (Potato).